The chain runs to 195 residues: Interferon omega-1 (195 aa).

The signal sequence occupies residues 1-23 (MAFSVSSLMALVVISSSPVSSMS). 2 disulfides stabilise this stretch: C24–C122 and C52–C162. N101 carries N-linked (GlcNAc...) asparagine glycosylation.

Belongs to the alpha/beta interferon family.

Its subcellular location is the secreted. This chain is Interferon omega-1, found in Equus caballus (Horse).